Here is a 420-residue protein sequence, read N- to C-terminus: Glucose-1-phosphate adenylyltransferase (420 aa).

Residues Y107, G173, 188–189, and S206 each bind alpha-D-glucose 1-phosphate; that span reads EK.

The protein belongs to the bacterial/plant glucose-1-phosphate adenylyltransferase family. As to quaternary structure, homotetramer.

It catalyses the reaction alpha-D-glucose 1-phosphate + ATP + H(+) = ADP-alpha-D-glucose + diphosphate. It functions in the pathway glycan biosynthesis; glycogen biosynthesis. Its function is as follows. Involved in the biosynthesis of ADP-glucose, a building block required for the elongation reactions to produce glycogen. Catalyzes the reaction between ATP and alpha-D-glucose 1-phosphate (G1P) to produce pyrophosphate and ADP-Glc. The protein is Glucose-1-phosphate adenylyltransferase of Shewanella baltica (strain OS155 / ATCC BAA-1091).